A 102-amino-acid chain; its full sequence is Early lactation protein (102 aa).

A signal peptide spans 1 to 20 (MKFTIIALCLALSLVGMTSS). 2 N-linked (GlcNAc...) asparagine glycosylation sites follow: N34 and N62. The BPTI/Kunitz inhibitor domain occupies 43–93 (CLLPSGRGNCDSQILRYFYNATSHTCEVFLYSGCNGNGNNFDSLECCLKTC). 3 disulfides stabilise this stretch: C43–C93, C52–C76, and C68–C89.

Post-translationally, N-glycosylated. Expressed by the mammary gland.

The protein resides in the secreted. The chain is Early lactation protein (ELP) from Trichosurus vulpecula (Brush-tailed possum).